Consider the following 459-residue polypeptide: ATP-dependent protease ATPase subunit HslU (459 aa).

Residues valine 26, 68 to 73, aspartate 271, glutamate 337, and arginine 409 contribute to the ATP site; that span reads GVGKTE.

This sequence belongs to the ClpX chaperone family. HslU subfamily. A double ring-shaped homohexamer of HslV is capped on each side by a ring-shaped HslU homohexamer. The assembly of the HslU/HslV complex is dependent on binding of ATP.

It localises to the cytoplasm. Its function is as follows. ATPase subunit of a proteasome-like degradation complex; this subunit has chaperone activity. The binding of ATP and its subsequent hydrolysis by HslU are essential for unfolding of protein substrates subsequently hydrolyzed by HslV. HslU recognizes the N-terminal part of its protein substrates and unfolds these before they are guided to HslV for hydrolysis. In Xylella fastidiosa (strain M12), this protein is ATP-dependent protease ATPase subunit HslU.